The chain runs to 255 residues: Imidazole glycerol phosphate synthase subunit HisF (255 aa).

Catalysis depends on residues Asp-11 and Asp-130.

This sequence belongs to the HisA/HisF family. Heterodimer of HisH and HisF.

The protein resides in the cytoplasm. The enzyme catalyses 5-[(5-phospho-1-deoxy-D-ribulos-1-ylimino)methylamino]-1-(5-phospho-beta-D-ribosyl)imidazole-4-carboxamide + L-glutamine = D-erythro-1-(imidazol-4-yl)glycerol 3-phosphate + 5-amino-1-(5-phospho-beta-D-ribosyl)imidazole-4-carboxamide + L-glutamate + H(+). It functions in the pathway amino-acid biosynthesis; L-histidine biosynthesis; L-histidine from 5-phospho-alpha-D-ribose 1-diphosphate: step 5/9. In terms of biological role, IGPS catalyzes the conversion of PRFAR and glutamine to IGP, AICAR and glutamate. The HisF subunit catalyzes the cyclization activity that produces IGP and AICAR from PRFAR using the ammonia provided by the HisH subunit. This is Imidazole glycerol phosphate synthase subunit HisF from Maricaulis maris (strain MCS10) (Caulobacter maris).